A 225-amino-acid polypeptide reads, in one-letter code: Transmembrane protein C16orf54 homolog (225 aa).

The chain crosses the membrane as a helical span at residues Ile-34–Leu-54. The interval Arg-107 to Gln-149 is disordered. Residues Thr-113 and Thr-117 each carry the phosphothreonine modification. Position 195 is a phosphoserine (Ser-195).

The protein localises to the membrane. In Rattus norvegicus (Rat), this protein is Transmembrane protein C16orf54 homolog.